The following is a 379-amino-acid chain: Stimulator of interferon genes protein (379 aa).

The next 3 helical transmembrane spans lie at 20-40 (VAAF…GEPS), 87-107 (ACLG…YFYV), and 115-135 (LPLT…ILLG). 2 S-palmitoyl cysteine lipidation sites follow: cysteine 88 and cysteine 91. Positions 153 to 340 (FNVAHGLAWS…KHLRQEEREE (188 aa)) are cyclic dinucleotide-binding domain (CBD). Positions 162, 167, 238, and 263 each coordinate 2',3'-cGAMP. 3',3'-c-di-GMP contacts are provided by residues serine 162, tyrosine 167, 238–241 (RVYT), and threonine 263. 2',3'-cUAMP contacts are provided by tyrosine 167, arginine 238, and threonine 263. The segment at 340 to 379 (EVTMGTAGTFVAPGSSTLHQEPELLISGMDQPLPLRTDIF) is C-terminal tail (CTT). Serine 355 bears the Phosphoserine mark. Threonine 356 is modified (phosphothreonine). A pLxIS motif motif is present at residues 363–366 (LLIS). Residue serine 366 is modified to Phosphoserine; by TBK1.

This sequence belongs to the STING family. In terms of assembly, homodimer; forms a homodimer in absence of cyclic nucleotide (c-di-GMP or cGAMP). Homotetramer; in presence of cyclic nucleotide (c-di-GMP or cGAMP), forms tetramers and higher-order oligomers through side-by-side packing. Interacts (when phosphorylated) with IRF3; following activation and phosphorylation on the pLxIS motif by TBK1, recruits IRF3. Interacts with TBK1; when homodimer, leading to subsequent production of IFN-beta. Interacts (via transmembrane domain) with TMEM203. Phosphorylation by TBK1 leads to activation and production of IFN-beta. Following cyclic nucleotide (c-di-GMP or cGAMP)-binding, activation and translocation from the endoplasmic reticulum, STING1 is phosphorylated by TBK1 at Ser-366 in the pLxIS motif. The phosphorylated pLxIS motif constitutes an IRF3-binding motif, leading to recruitment of the transcription factor IRF3 to induce type-I interferons and other cytokines. In contrast, lacks phosphorylation site at position 358, leading to reduced production of type-I interferons and other cytokines.

The protein resides in the endoplasmic reticulum membrane. It is found in the cytoplasm. The protein localises to the perinuclear region. It localises to the endoplasmic reticulum-Golgi intermediate compartment membrane. Its subcellular location is the golgi apparatus membrane. The protein resides in the cytoplasmic vesicle. It is found in the autophagosome membrane. The protein localises to the mitochondrion outer membrane. It localises to the cell membrane. It carries out the reaction H(+)(in) = H(+)(out). Facilitator of innate immune signaling that acts as a sensor of cytosolic DNA from bacteria and viruses and promotes low production of type I interferon (IFN-alpha and IFN-beta). Compared to other mammals, STING1-dependent type I interferon induction is strongly reduced in bats, suggesting that the cGAS-STING pathway promotes a limited inflammatory response. Innate immune response is triggered in response to non-CpG double-stranded DNA from viruses and bacteria delivered to the cytoplasm. Acts by binding cyclic dinucleotides: recognizes and binds cyclic di-GMP (c-di-GMP), a second messenger produced by bacteria, cyclic UMP-AMP (2',3'-cUAMP), and cyclic GMP-AMP (cGAMP), a messenger produced by CGAS in response to DNA virus in the cytosol. Upon binding to c-di-GMP, cUAMP or cGAMP, STING1 oligomerizes, translocates from the endoplasmic reticulum and is phosphorylated by TBK1 on the pLxIS motif, leading to recruitment and subsequent activation of the transcription factor IRF3 to induce expression of type I interferon and exert a potent anti-viral state. In addition to promote the production of type I interferons, plays a direct role in autophagy. Following cGAMP-binding, STING1 buds from the endoplasmic reticulum into COPII vesicles, which then form the endoplasmic reticulum-Golgi intermediate compartment (ERGIC). The ERGIC serves as the membrane source for WIPI2 recruitment and LC3 lipidation, leading to formation of autophagosomes that target cytosolic DNA or DNA viruses for degradation by the lysosome. Promotes autophagy by acting as a proton channel that directs proton efflux from the Golgi to facilitate MAP1LC3B/LC3B lipidation. The autophagy- and interferon-inducing activities can be uncoupled and autophagy induction is independent of TBK1 phosphorylation. The sequence is that of Stimulator of interferon genes protein from Eidolon helvum (Straw-colored fruit bat).